Reading from the N-terminus, the 529-residue chain is NAD(P)H-quinone oxidoreductase chain 4 1 (529 aa).

13 consecutive transmembrane segments (helical) span residues 4–24 (FPWLTTIILFPIVAALAIPFI), 36–56 (WYALAVGLIDFALIVYAFTNF), 91–111 (LILLTGFITTLAILAAWPVTL), 115–135 (LFYFLMLAMYGGQIAVFAVQD), 137–157 (LVFFLAWELELIPVYLLLAIW), 169–189 (FILYTAGSSLFILVAGLAMAF), 209–229 (GFQLLVYAGFLVAYGVKLPIV), 243–263 (TAPVHMLLAGILLKMGGYALI), 277–297 (FAPVLVILGVVNIIYAALTSY), 314–334 (IGFVLIGIASFTNLGMSGAVL), 335–355 (QMVSHGLIGASLFFLVGATYD), 387–407 (LALPGMSGFVAELMVFIGFAT), and 417–437 (VIVVFLAAVGVILTPIYLLSM).

It belongs to the complex I subunit 4 family.

Its subcellular location is the cellular thylakoid membrane. The enzyme catalyses a plastoquinone + NADH + (n+1) H(+)(in) = a plastoquinol + NAD(+) + n H(+)(out). The catalysed reaction is a plastoquinone + NADPH + (n+1) H(+)(in) = a plastoquinol + NADP(+) + n H(+)(out). NDH-1 shuttles electrons from NAD(P)H, via FMN and iron-sulfur (Fe-S) centers, to quinones in the respiratory chain. The immediate electron acceptor for the enzyme in this species is believed to be plastoquinone. Couples the redox reaction to proton translocation (for every two electrons transferred, four hydrogen ions are translocated across the cytoplasmic membrane), and thus conserves the redox energy in a proton gradient. The protein is NAD(P)H-quinone oxidoreductase chain 4 1 of Thermosynechococcus vestitus (strain NIES-2133 / IAM M-273 / BP-1).